Reading from the N-terminus, the 406-residue chain is Zinc finger protein CONSTANS-LIKE 6 (406 aa).

C17, C20, C40, and H45 together coordinate Zn(2+). The B box-type; atypical zinc-finger motif lies at 17 to 59 (CDSCVKRRARWYCAADDAFLCHACDGSVHSANPLARRHERVRL). The tract at residues 63–95 (SAGKYRHASPPHQATWHQGFTRKARTPRGGKKS) is disordered. Positions 82–95 (FTRKARTPRGGKKS) are enriched in basic residues. Positions 357–399 (REARVSRYREKRRTRLFSKKIRYEVRKLNAEKRPRMKGRFVKR) constitute a CCT domain.

The protein belongs to the CONSTANS family.

It localises to the nucleus. This is Zinc finger protein CONSTANS-LIKE 6 (COL6) from Arabidopsis thaliana (Mouse-ear cress).